The chain runs to 93 residues: uncharacterized protein (93 aa).

A run of 2 helical transmembrane segments spans residues 8–28 (FIGI…LLAS) and 54–74 (ACFL…YLIL).

Its subcellular location is the cell membrane. This is an uncharacterized protein from Methanocaldococcus jannaschii (strain ATCC 43067 / DSM 2661 / JAL-1 / JCM 10045 / NBRC 100440) (Methanococcus jannaschii).